The chain runs to 198 residues: Twist-related protein 1 (198 aa).

Over residues 1–18 (MMQDVSSSPVSPADDSLS) the composition is skewed to low complexity. A disordered region spans residues 1-101 (MMQDVSSSPV…GGGSPQSYEE (101 aa)). The span at 34–43 (RGGRKRRSSR) shows a compositional bias: basic residues. 2 stretches are compositionally biased toward gly residues: residues 46-64 (AGGG…GGDE) and 79-95 (GCGG…GGGS). The region spanning 104–155 (TQRVMANVRERQRTQSLNEAFAALRKIIPTLPSDKLSKIQTLKLAARYIDFL) is the bHLH domain. Residues 157-187 (QVLQSDELDSKMASCSYVAHERLSYAFSVWR) are sufficient for transactivation activity.

Efficient DNA binding requires dimerization with another bHLH protein. Homodimer or heterodimer with E proteins such as TCF3. ID1 binds preferentially to TCF3 but does not interact efficiently with TWIST1 so ID1 levels control the amount of TCF3 available to dimerize with TWIST and thus determine the type of dimer formed.

It is found in the nucleus. Acts as a transcriptional regulator. Inhibits myogenesis by sequestrating E proteins, inhibiting trans-activation by MEF2, and inhibiting DNA-binding by MYOD1 through physical interaction. This interaction probably involves the basic domains of both proteins. Also represses expression of pro-inflammatory cytokines such as TNFA and IL1B. Regulates cranial suture patterning and fusion. Activates transcription as a heterodimer with E proteins. Regulates gene expression differentially, depending on dimer composition. Homodimers induce expression of FGFR2 and POSTN while heterodimers repress FGFR2 and POSTN expression and induce THBS1 expression. Heterodimerization is also required for osteoblast differentiation. Represses the activity of the circadian transcriptional activator: NPAS2-BMAL1 heterodimer. The sequence is that of Twist-related protein 1 (TWIST1) from Eulemur fulvus fulvus (Brown lemur).